Here is a 210-residue protein sequence, read N- to C-terminus: Glycerol-3-phosphate acyltransferase (210 aa).

5 helical membrane passes run alanine 10–isoleucine 30, proline 59–alanine 79, alanine 87–phenylalanine 107, phenylalanine 116–leucine 136, and leucine 161–isoleucine 181.

It belongs to the PlsY family. In terms of assembly, probably interacts with PlsX.

Its subcellular location is the cell inner membrane. The enzyme catalyses an acyl phosphate + sn-glycerol 3-phosphate = a 1-acyl-sn-glycero-3-phosphate + phosphate. It participates in lipid metabolism; phospholipid metabolism. Catalyzes the transfer of an acyl group from acyl-phosphate (acyl-PO(4)) to glycerol-3-phosphate (G3P) to form lysophosphatidic acid (LPA). This enzyme utilizes acyl-phosphate as fatty acyl donor, but not acyl-CoA or acyl-ACP. The chain is Glycerol-3-phosphate acyltransferase from Cereibacter sphaeroides (strain ATCC 17025 / ATH 2.4.3) (Rhodobacter sphaeroides).